Here is a 540-residue protein sequence, read N- to C-terminus: MSRQFTYKSGAAAKGGFSGCSAVLSGGSSSSYRAGGKGLSGGFSSRSLYSLGGARSISFNVASGSGWAGGYGFGRGRASGFAGSMFGSVALGSVCPSLCPPGGIHQVTINKSLLAPLNVELDPEIQKVRAQEREQIKVLNNKFASFIDKVRFLEQQNQVLETKWELLQQLDLNNCKNNLEPILEGYISNLRKQLETLSGDRVRLDSELRSVREVVEDYKKRYEEEINKRTTAENEFVVLKKDVDAAYTSKVELQAKVDALDGEIKFFKCLYEGETAQIQSHISDTSIILSMDNNRNLDLDSIIAEVRAQYEEIARKSKAEAEALYQTKFQELQLAAGRHGDDLKHTKNEISELTRLIQRLRSEIESVKKQCANLETAIADAEQRGDCALKDARAKLDELEGALQQAKEELARMLREYQELLSVKLSLDIEIATYRKLLEGEECRMSGEYTNSVSISVINSSMAGMAGTGAGFGFSNAGTYGYWPSSVSGGYSMLPGGCVTGSGNCSPRGEARTRLGSASEFRDSQGKTLALSSPTKKTMR.

The interval 1–131 is head; the sequence is MSRQFTYKSG…DPEIQKVRAQ (131 aa). The coil 1A stretch occupies residues 132–167; that stretch reads EREQIKVLNNKFASFIDKVRFLEQQNQVLETKWELL. One can recognise an IF rod domain in the interval 132–445; it reads EREQIKVLNN…KLLEGEECRM (314 aa). The segment at 168–186 is linker 1; that stretch reads QQLDLNNCKNNLEPILEGY. Positions 187 to 278 are coil 1B; it reads ISNLRKQLET…CLYEGETAQI (92 aa). The linker 12 stretch occupies residues 279-302; that stretch reads QSHISDTSIILSMDNNRNLDLDSI. The interval 303–441 is coil 2; that stretch reads IAEVRAQYEE…ATYRKLLEGE (139 aa). The tail stretch occupies residues 442–540; that stretch reads ECRMSGEYTN…LSSPTKKTMR (99 aa). The segment at 502-540 is disordered; sequence SGNCSPRGEARTRLGSASEFRDSQGKTLALSSPTKKTMR. The span at 526-540 shows a compositional bias: polar residues; the sequence is GKTLALSSPTKKTMR.

Belongs to the intermediate filament family. In terms of assembly, heterotetramer of two type I and two type II keratins. In terms of tissue distribution, highly expressed in hair follicles from scalp. In hair, it is specifically present in the inner root sheath (IRS) of the hair follicle. Present in the IRS cuticle, but not in Henle or Huxley layers of the IRS. In the IRS cuticle, it is expressed between the lowermost bulb region of the cuticle and the region where Henle cells undergo abrupt terminal differentiation. Detected up to the uppermost cortex region where cuticle cells terminally differentiate (at protein level).

Its function is as follows. Has a role in hair formation. Specific component of keratin intermediate filaments in the inner root sheath (IRS) of the hair follicle. The polypeptide is Keratin, type II cytoskeletal 73 (KRT73) (Homo sapiens (Human)).